Here is a 411-residue protein sequence, read N- to C-terminus: Adenylosuccinate synthetase (411 aa).

Residues G11–K17 and G39–T41 contribute to the GTP site. Residue D12 is the Proton acceptor of the active site. Mg(2+) is bound by residues D12 and G39. Residues D12–K15, N37–H40, T121, R135, Q215, T230, and R294 contribute to the IMP site. The active-site Proton donor is the H40. T290–R296 is a substrate binding site. GTP contacts are provided by residues R296, K322 to D324, and S400 to S402.

This sequence belongs to the adenylosuccinate synthetase family. Homodimer. Requires Mg(2+) as cofactor.

The protein localises to the cytoplasm. The catalysed reaction is IMP + L-aspartate + GTP = N(6)-(1,2-dicarboxyethyl)-AMP + GDP + phosphate + 2 H(+). It functions in the pathway purine metabolism; AMP biosynthesis via de novo pathway; AMP from IMP: step 1/2. Plays an important role in the de novo pathway of purine nucleotide biosynthesis. Catalyzes the first committed step in the biosynthesis of AMP from IMP. The protein is Adenylosuccinate synthetase of Helicobacter pylori (strain HPAG1).